Reading from the N-terminus, the 385-residue chain is 8-amino-7-oxononanoate synthase (385 aa).

Arg23 is a binding site for substrate. Gly110–Phe111 serves as a coordination point for pyridoxal 5'-phosphate. Substrate is bound at residue His135. The pyridoxal 5'-phosphate site is built by Ser180, His208, and Thr234. Residue Lys237 is modified to N6-(pyridoxal phosphate)lysine. Substrate is bound at residue Thr350.

It belongs to the class-II pyridoxal-phosphate-dependent aminotransferase family. BioF subfamily. As to quaternary structure, homodimer. The cofactor is pyridoxal 5'-phosphate.

It carries out the reaction 6-carboxyhexanoyl-[ACP] + L-alanine + H(+) = (8S)-8-amino-7-oxononanoate + holo-[ACP] + CO2. The protein operates within cofactor biosynthesis; biotin biosynthesis. Functionally, catalyzes the decarboxylative condensation of pimeloyl-[acyl-carrier protein] and L-alanine to produce 8-amino-7-oxononanoate (AON), [acyl-carrier protein], and carbon dioxide. The polypeptide is 8-amino-7-oxononanoate synthase (Vibrio vulnificus (strain YJ016)).